The following is a 296-amino-acid chain: 4-diphosphocytidyl-2-C-methyl-D-erythritol kinase (296 aa).

Residue Lys-14 is part of the active site. Residue 97-107 (PMGAGMGGGSS) participates in ATP binding. Residue Asp-139 is part of the active site.

It belongs to the GHMP kinase family. IspE subfamily.

It catalyses the reaction 4-CDP-2-C-methyl-D-erythritol + ATP = 4-CDP-2-C-methyl-D-erythritol 2-phosphate + ADP + H(+). Its pathway is isoprenoid biosynthesis; isopentenyl diphosphate biosynthesis via DXP pathway; isopentenyl diphosphate from 1-deoxy-D-xylulose 5-phosphate: step 3/6. In terms of biological role, catalyzes the phosphorylation of the position 2 hydroxy group of 4-diphosphocytidyl-2C-methyl-D-erythritol. The polypeptide is 4-diphosphocytidyl-2-C-methyl-D-erythritol kinase (Polynucleobacter necessarius subsp. necessarius (strain STIR1)).